Here is a 445-residue protein sequence, read N- to C-terminus: Phosphoglucosamine mutase (445 aa).

S99 functions as the Phosphoserine intermediate in the catalytic mechanism. 4 residues coordinate Mg(2+): S99, D242, D244, and D246. At S99 the chain carries Phosphoserine.

Belongs to the phosphohexose mutase family. Mg(2+) is required as a cofactor. Post-translationally, activated by phosphorylation.

It carries out the reaction alpha-D-glucosamine 1-phosphate = D-glucosamine 6-phosphate. In terms of biological role, catalyzes the conversion of glucosamine-6-phosphate to glucosamine-1-phosphate. This is Phosphoglucosamine mutase from Campylobacter jejuni subsp. jejuni serotype O:6 (strain 81116 / NCTC 11828).